The sequence spans 126 residues: Protein ApaG (126 aa).

The 125-residue stretch at 2–126 (KQLESSIRIE…FRLAAPGLLH (125 aa)) folds into the ApaG domain.

The polypeptide is Protein ApaG (Shewanella loihica (strain ATCC BAA-1088 / PV-4)).